Consider the following 306-residue polypeptide: Aspartate carbamoyltransferase catalytic subunit (306 aa).

2 residues coordinate carbamoyl phosphate: Arg-51 and Thr-52. Residue Lys-80 participates in L-aspartate binding. Carbamoyl phosphate contacts are provided by Arg-101, His-129, and Gln-132. Residues Arg-162 and Arg-224 each contribute to the L-aspartate site. The carbamoyl phosphate site is built by Leu-263 and Pro-264.

It belongs to the aspartate/ornithine carbamoyltransferase superfamily. ATCase family. In terms of assembly, heterododecamer (2C3:3R2) of six catalytic PyrB chains organized as two trimers (C3), and six regulatory PyrI chains organized as three dimers (R2).

The catalysed reaction is carbamoyl phosphate + L-aspartate = N-carbamoyl-L-aspartate + phosphate + H(+). The protein operates within pyrimidine metabolism; UMP biosynthesis via de novo pathway; (S)-dihydroorotate from bicarbonate: step 2/3. Catalyzes the condensation of carbamoyl phosphate and aspartate to form carbamoyl aspartate and inorganic phosphate, the committed step in the de novo pyrimidine nucleotide biosynthesis pathway. This Parabacteroides distasonis (strain ATCC 8503 / DSM 20701 / CIP 104284 / JCM 5825 / NCTC 11152) protein is Aspartate carbamoyltransferase catalytic subunit.